A 138-amino-acid polypeptide reads, in one-letter code: uncharacterized protein (138 aa).

This is an uncharacterized protein from Homo sapiens (Human).